Here is a 906-residue protein sequence, read N- to C-terminus: Gamma-tubulin complex component 3 homolog (906 aa).

Residues 208 to 229 (GQQPSQQSTTTKGLPNTVSRNV) show a composition bias toward polar residues. Residues 208–242 (GQQPSQQSTTTKGLPNTVSRNVPRTRREGDSSGSV) are disordered.

This sequence belongs to the TUBGCP family. Interacts with gamma-tubulin.

It localises to the cytoplasm. The protein localises to the cytoskeleton. Its subcellular location is the microtubule organizing center. The protein resides in the centrosome. Necessary for the recruitment of gamma-tubulin to the centrosome and for the formation of a functional centrosome. This Xenopus laevis (African clawed frog) protein is Gamma-tubulin complex component 3 homolog (tubgcp3).